The chain runs to 206 residues: MRRTGAPAQADSRGRGRARGGCPGGEATLSQPPPRGGTRGQEPQMKETIMNQEKLAKLQAQVRIGGKGTARRKKKVVHRTATADDKKLQFSLKKLGVNNISGIEEVNMFTNQGTVIHFNNPKVQASLAANTFTITGHAETKQLTEMLPSILNQLGADSLTSLRRLAEALPKQSVDGKAPLATGEDDDDEVPDLVENFDEASKNEAN.

The segment at 1–42 (MRRTGAPAQADSRGRGRARGGCPGGEATLSQPPPRGGTRGQE) is disordered. Arg-19 bears the Omega-N-methylarginine mark. Ser-30 bears the Phosphoserine mark. An N6-methyllysine mark is found at Lys-46 and Lys-54. The 66-residue stretch at 82 to 147 (TADDKKLQFS…AETKQLTEML (66 aa)) folds into the NAC-A/B domain. At Thr-160 the chain carries Phosphothreonine. Residues 170–206 (PKQSVDGKAPLATGEDDDDEVPDLVENFDEASKNEAN) form a disordered region. Position 173 is a phosphoserine (Ser-173). A compositionally biased stretch (acidic residues) spans 183-198 (GEDDDDEVPDLVENFD).

The protein belongs to the NAC-beta family. In terms of assembly, part of the nascent polypeptide-associated complex (NAC), which is a heterodimer of NACA and BTF3 (via NAC-A/B domains). NAC associates with ribosomes through the BTF3/NACB subunit. Both subunits can contact nascent polypeptide chains.

It localises to the cytoplasm. The protein localises to the nucleus. Its function is as follows. When associated with NACA, prevents inappropriate targeting of non-secretory polypeptides to the endoplasmic reticulum (ER). Binds to nascent polypeptide chains as they emerge from the ribosome and blocks their interaction with the signal recognition particle (SRP), which normally targets nascent secretory peptides to the ER. BTF3 is also a general transcription factor that can form a stable complex with RNA polymerase II. Required for the initiation of transcription. The polypeptide is Transcription factor BTF3 (BTF3) (Homo sapiens (Human)).